Reading from the N-terminus, the 448-residue chain is MAPRRAACLLPLLVAVASAGLGGYFGTKSRYEEVNPHLAEDPLSLGPHAAASRLPAACAPLQLRAVLRHGTRYPTAGQIRRLAELHGRLRRAAAPSCPAAAALAAWPMWYEESLDRLAPRGRRDMEHLARRLAARFPALFAARRRLALASSSKHRCLQSGAAFRRGLGPSLSLGADETEIEVNDALMRFFDHCDKFVAFVEDNDTAMYQVNAFKEGPEMRKVLEKVASALCLPASELNADLVQVAFLTCSYELAIKNVTSPWCSLFSEEDAKVLEYLNDLKQYWKRGYGYDINSRSSCILFQDIFQQLDKAVDESRSSKPISSPLIVQVGHAETLQPLLALMGYFKDAEPLQANNYIRQAHRKFRSGRIVPYAANLVFVLYHCEQKTSKEEYQVQMLLNEKPMLFHHSNETISTYADLKSYYKDILQNCHFEEVCELPKVNGTVADEL.

Positions 1 to 19 are cleaved as a signal peptide; sequence MAPRRAACLLPLLVAVASA. His69 is a catalytic residue. 4 N-linked (GlcNAc...) asparagine glycosylation sites follow: Asn203, Asn257, Asn409, and Asn441. A Prevents secretion from ER motif is present at residues 445 to 448; the sequence is ADEL.

This sequence belongs to the histidine acid phosphatase family. MINPP1 subfamily. N-glycosylated. Present in growth plate chondrocytes but not detectable in articular chondrocytes (at protein level). Spatially restricted to chondrocytes in the lower portion of the proliferative zone and the upper portion of the hypertrophic zone in the growth plate of long bones (at protein level). Weakly expressed in kidney, liver, lung, skin and spleen, and not detected in brain, heart and muscle.

It is found in the endoplasmic reticulum lumen. It localises to the secreted. Its subcellular location is the cell membrane. It carries out the reaction 1D-myo-inositol hexakisphosphate + H2O = 1D-myo-inositol 1,2,4,5,6-pentakisphosphate + phosphate. The catalysed reaction is 1D-myo-inositol 1,2,4,5,6-pentakisphosphate + H2O = 1D-myo-inositol 1,2,5,6-tetrakisphosphate + phosphate. It catalyses the reaction 1D-myo-inositol 1,2,5,6-tetrakisphosphate + H2O = 1D-myo-inositol 1,2,6-trisphosphate + phosphate. The enzyme catalyses 1D-myo-inositol 1,2,6-trisphosphate + H2O = 1D-myo-inositol 1,2-bisphosphate + phosphate. It carries out the reaction 1D-myo-inositol 1,2-bisphosphate + H2O = 1D-myo-inositol 2-phosphate + phosphate. The catalysed reaction is 1D-myo-inositol hexakisphosphate + H2O = 1D-myo-inositol 1,2,3,5,6-pentakisphosphate + phosphate. It catalyses the reaction 1D-myo-inositol 1,2,3,5,6-pentakisphosphate + H2O = 1D-myo-inositol 1,2,3,6-tetrakisphosphate + phosphate. The enzyme catalyses 1D-myo-inositol 1,2,3,6-tetrakisphosphate + H2O = 1D-myo-inositol 1,2,3-trisphosphate + phosphate. It carries out the reaction 1D-myo-inositol 1,2,3-trisphosphate + H2O = 1D-myo-inositol 2,3-bisphosphate + phosphate. The catalysed reaction is 1D-myo-inositol 2,3-bisphosphate + H2O = 1D-myo-inositol 2-phosphate + phosphate. It catalyses the reaction 1D-myo-inositol 1,3,4,5,6-pentakisphosphate + H2O = 1D-myo-inositol 1,4,5,6-tetrakisphosphate + phosphate. The enzyme catalyses 1D-myo-inositol 1,4,5,6-tetrakisphosphate + H2O = 1D-myo-inositol 1,4,5-trisphosphate + phosphate. It carries out the reaction (2R)-2,3-bisphosphoglycerate + H2O = (2R)-2-phosphoglycerate + phosphate. Functionally, multiple inositol polyphosphate phosphatase that hydrolyzes 1D-myo-inositol 1,3,4,5,6-pentakisphosphate (InsP5[2OH]) and 1D-myo-inositol hexakisphosphate (InsP6) to a range of less phosphorylated inositol phosphates. This regulates the availability of these various small molecule second messengers and metal chelators which control many aspects of cell physiology. Has a weak in vitro activity towards 1D-myo-inositol 1,4,5-trisphosphate which is unlikely to be physiologically relevant. By regulating intracellular inositol polyphosphates pools, which act as metal chelators, it may control the availability of intracellular calcium and iron, which are important for proper neuronal development and homeostasis. May have a dual substrate specificity, and function as a 2,3-bisphosphoglycerate 3-phosphatase hydrolyzing 2,3-bisphosphoglycerate to 2-phosphoglycerate. 2,3-bisphosphoglycerate (BPG) is formed as part of the Rapoport-Luebering glycolytic bypass and is a regulator of systemic oxygen homeostasis as the major allosteric effector of hemoglobin. The chain is Multiple inositol polyphosphate phosphatase 1 (MINPP1) from Gallus gallus (Chicken).